The sequence spans 155 residues: Small ribosomal subunit protein uS7cz/uS7cy (155 aa).

The protein belongs to the universal ribosomal protein uS7 family. Part of the 30S ribosomal subunit.

It localises to the plastid. It is found in the chloroplast. Functionally, one of the primary rRNA binding proteins, it binds directly to 16S rRNA where it nucleates assembly of the head domain of the 30S subunit. The sequence is that of Small ribosomal subunit protein uS7cz/uS7cy (rps7-A) from Nymphaea alba (White water-lily).